Here is a 919-residue protein sequence, read N- to C-terminus: Kinesin-like protein KIN-6 (919 aa).

The interval 1 to 59 (MVRLSTKPPNPKVEMNLKEPPITGAGAGAAASPPAPSTLRRNPPRSARPPPTPLPNSKP) is disordered. The segment covering 28–45 (GAAASPPAPSTLRRNPPR) has biased composition (low complexity). The segment covering 46-56 (SARPPPTPLPN) has biased composition (pro residues). Residues 72–415 (RLKVFLRIRP…LRQASPYMKI (344 aa)) form the Kinesin motor domain. 171 to 178 (GPTGSGKT) provides a ligand contact to ATP. Disordered regions lie at residues 591–615 (EEVS…TGTG), 674–700 (SESC…SFTD), 711–730 (SPQF…EEER), 737–764 (TTEG…EVNS), and 886–919 (KEEK…GRAQ). The span at 597-612 (STGHGPERSSDYDDKT) shows a compositional bias: basic and acidic residues. Positions 685 to 697 (HSSSSLDHPSDQS) are enriched in low complexity. Positions 755–764 (TPSCSQEVNS) are enriched in polar residues. Over residues 886 to 912 (KEEKVKSSRDAMGRSDKLIRLLTDHPP) the composition is skewed to basic and acidic residues.

This sequence belongs to the TRAFAC class myosin-kinesin ATPase superfamily. Kinesin family. KIN-6 subfamily.

The chain is Kinesin-like protein KIN-6 from Oryza sativa subsp. japonica (Rice).